A 403-amino-acid polypeptide reads, in one-letter code: Major capsid protein (403 aa).

The protein resides in the virion. Assembles to form an icosahedral capsid. In Staphylococcus aureus, this protein is Major capsid protein.